A 651-amino-acid polypeptide reads, in one-letter code: Probable potassium transport system protein Kup (651 aa).

Helical transmembrane passes span Leu41–Phe61, Val82–Val102, Leu130–Pro150, Ile163–Leu183, Val194–Leu214, Phe235–Thr255, Trp276–Leu296, Met309–Ala329, Ile366–Phe386, Ala395–Met415, Ala426–Ile446, and Glu450–Val470.

The protein belongs to the HAK/KUP transporter (TC 2.A.72) family.

The protein resides in the cell inner membrane. It carries out the reaction K(+)(in) + H(+)(in) = K(+)(out) + H(+)(out). Functionally, transport of potassium into the cell. Likely operates as a K(+):H(+) symporter. This Brucella melitensis biotype 1 (strain ATCC 23456 / CCUG 17765 / NCTC 10094 / 16M) protein is Probable potassium transport system protein Kup.